Consider the following 338-residue polypeptide: UDP-3-O-acylglucosamine N-acyltransferase (338 aa).

Histidine 251 serves as the catalytic Proton acceptor.

This sequence belongs to the transferase hexapeptide repeat family. LpxD subfamily. In terms of assembly, homotrimer.

It catalyses the reaction a UDP-3-O-[(3R)-3-hydroxyacyl]-alpha-D-glucosamine + a (3R)-hydroxyacyl-[ACP] = a UDP-2-N,3-O-bis[(3R)-3-hydroxyacyl]-alpha-D-glucosamine + holo-[ACP] + H(+). It participates in bacterial outer membrane biogenesis; LPS lipid A biosynthesis. Its function is as follows. Catalyzes the N-acylation of UDP-3-O-acylglucosamine using 3-hydroxyacyl-ACP as the acyl donor. Is involved in the biosynthesis of lipid A, a phosphorylated glycolipid that anchors the lipopolysaccharide to the outer membrane of the cell. The polypeptide is UDP-3-O-acylglucosamine N-acyltransferase (Psychrobacter cryohalolentis (strain ATCC BAA-1226 / DSM 17306 / VKM B-2378 / K5)).